Reading from the N-terminus, the 1029-residue chain is MATKTKDFQEKKLFQVVRELNVSEDRVVEFLEEEGYEEALSGSGLNAKIVDEEAYLVLREEYADDAEVAARIRELRSEEDDGGPERDEVATLDEEQAAEPESATETAEEAAEPAVADDEEEPRASGDAAPEAAPAEEDTSDATAPADAEAEPSGDEASAEASADDAPADEAPTDEAETAPVDAADKDAAAIADEQKQAAQEPDAEADASGQDTGEETSDTDAATEADATDDAEAESAAPEPTEAEPETPADETEAEDVSADKETASAEEADDHASDEHAPDEDAEAPEEPTEAEGEADDTTEEETPAEGADDAADDEADEEGETLKAGRYRLKGPSVVGKMDSDQLQRPDRKRKRKDKDKDKDKSSKKDKKDKSNKKSKSKGKKQKGGGGGGPDEEDIEQTLQETLQELEQGASRERQRRRRRRRKRHEEERQRRRERKREQENILEVTEFVTTGELANLIGEPVSDVIDTLFDAGMMVSINQRLDTETIEFVADEYGYEVEFVAERDTQAVEVEEDDPEDLEPRAPVVTVMGHVDHGKTSLLDYVRNANVVAGEEGGITQHVGAHYVELTDHDNEAIAFLDTPGHEAFTAMRARGAKATDIVILVVAADDSVMPRTKEAINHAQAADVPIVVAINKMDKREADAEKVRAELADQNVLVEEYGGDVQSAEVSAKTGDGINELLDKVLLQSEIMELKANPNREASGVIIESRLEKGRGNVITVLVQNGTLETGDPFLAGIHSGSVRAMFNERDNRIESVGPSQPALVLGCDGSPEVGDQFVVMDSEGEARDVAQERQRIHREQELRRQSQVSLDQVSRQMAEGEFHELNLIIKADVGGSVEALSDALLKLKTDEVAVNVIHSGVGAITESDVMLARASDAIILGFQVRPTSGAREASQREEVDIRTYSVIYAAIEDVRDALEGLLSPERREETKGRAEVRDTFSVPDVGMVAGCYVNEGTVGRNQKVRLVRDGVVQYEGEISSLKRFEEDVSEVQSGYECGLSIENFDDLKVGDELETYVIVEEARELEV.

The tract at residues 73 to 441 (RELRSEEDDG…RQRRRERKRE (369 aa)) is disordered. Composition is skewed to acidic residues over residues 106-121 (TAEEAAEPAVADDEEE) and 148-177 (AEAEPSGDEASAEASADDAPADEAPTDEAE). Over residues 183-196 (AADKDAAAIADEQK) the composition is skewed to basic and acidic residues. Composition is skewed to acidic residues over residues 213–234 (TGEETSDTDAATEADATDDAEA), 242–258 (TEAEPETPADETEAEDV), and 279–322 (APDE…DEEG). A compositionally biased stretch (basic and acidic residues) spans 358–372 (KDKDKDKSSKKDKKD). Residues 373–386 (KSNKKSKSKGKKQK) show a composition bias toward basic residues. Residues 400-411 (QTLQETLQELEQ) show a composition bias toward low complexity. Basic residues predominate over residues 417–427 (RQRRRRRRRKR). Positions 428 to 441 (HEEERQRRRERKRE) are enriched in basic and acidic residues. In terms of domain architecture, tr-type G spans 524–696 (PRAPVVTVMG…LLQSEIMELK (173 aa)). A G1 region spans residues 533–540 (GHVDHGKT). 533–540 (GHVDHGKT) lines the GTP pocket. Positions 558-562 (GITQH) are G2. Positions 582 to 585 (DTPG) are G3. GTP contacts are provided by residues 582–586 (DTPGH) and 636–639 (NKMD). The interval 636–639 (NKMD) is G4. Residues 672 to 674 (SAK) are G5.

This sequence belongs to the TRAFAC class translation factor GTPase superfamily. Classic translation factor GTPase family. IF-2 subfamily.

It localises to the cytoplasm. In terms of biological role, one of the essential components for the initiation of protein synthesis. Protects formylmethionyl-tRNA from spontaneous hydrolysis and promotes its binding to the 30S ribosomal subunits. Also involved in the hydrolysis of GTP during the formation of the 70S ribosomal complex. This chain is Translation initiation factor IF-2, found in Salinibacter ruber (strain DSM 13855 / M31).